The chain runs to 777 residues: Biotin sulfoxide reductase (777 aa).

S148 serves as a coordination point for Mo-bis(molybdopterin guanine dinucleotide).

This sequence belongs to the prokaryotic molybdopterin-containing oxidoreductase family. The cofactor is Mo-bis(molybdopterin guanine dinucleotide).

The enzyme catalyses [thioredoxin]-disulfide + L-methionine + H2O = L-methionine (S)-S-oxide + [thioredoxin]-dithiol. This enzyme may serve as a scavenger, allowing the cell to utilize biotin sulfoxide as a biotin source. It reduces a spontaneous oxidation product of biotin, D-biotin D-sulfoxide (BSO or BDS), back to biotin. Also exhibits methionine-(S)-sulfoxide (Met-S-SO) reductase activity, acting specifically on the (S) enantiomer in the free, but not the protein-bound form. It thus plays a role in assimilation of oxidized methionines. The sequence is that of Biotin sulfoxide reductase (bisC) from Escherichia coli (strain K12).